A 357-amino-acid chain; its full sequence is Uroporphyrinogen decarboxylase (357 aa).

Substrate is bound by residues 27–31, aspartate 77, tyrosine 154, threonine 209, and histidine 327; that span reads RQAGR.

This sequence belongs to the uroporphyrinogen decarboxylase family. In terms of assembly, homodimer.

The protein localises to the cytoplasm. It carries out the reaction uroporphyrinogen III + 4 H(+) = coproporphyrinogen III + 4 CO2. It participates in porphyrin-containing compound metabolism; protoporphyrin-IX biosynthesis; coproporphyrinogen-III from 5-aminolevulinate: step 4/4. Its function is as follows. Catalyzes the decarboxylation of four acetate groups of uroporphyrinogen-III to yield coproporphyrinogen-III. This chain is Uroporphyrinogen decarboxylase, found in Nitrosococcus oceani (strain ATCC 19707 / BCRC 17464 / JCM 30415 / NCIMB 11848 / C-107).